The following is a 247-amino-acid chain: tRNA pseudouridine synthase A (247 aa).

Aspartate 58 acts as the Nucleophile in catalysis. Tyrosine 116 is a binding site for substrate.

Belongs to the tRNA pseudouridine synthase TruA family. As to quaternary structure, homodimer.

It carries out the reaction uridine(38/39/40) in tRNA = pseudouridine(38/39/40) in tRNA. Formation of pseudouridine at positions 38, 39 and 40 in the anticodon stem and loop of transfer RNAs. This is tRNA pseudouridine synthase A from Hydrogenobaculum sp. (strain Y04AAS1).